We begin with the raw amino-acid sequence, 258 residues long: Pyridoxine 5'-phosphate synthase (258 aa).

Asn-6 serves as a coordination point for 3-amino-2-oxopropyl phosphate. 8–9 (DH) serves as a coordination point for 1-deoxy-D-xylulose 5-phosphate. Arg-17 is a 3-amino-2-oxopropyl phosphate binding site. Residue His-42 is the Proton acceptor of the active site. Residues Arg-44 and His-49 each coordinate 1-deoxy-D-xylulose 5-phosphate. Glu-69 (proton acceptor) is an active-site residue. Thr-99 lines the 1-deoxy-D-xylulose 5-phosphate pocket. The Proton donor role is filled by His-213. Residues Gly-214 and 235-236 (GQ) contribute to the 3-amino-2-oxopropyl phosphate site.

This sequence belongs to the PNP synthase family. As to quaternary structure, homooctamer; tetramer of dimers.

Its subcellular location is the cytoplasm. It carries out the reaction 3-amino-2-oxopropyl phosphate + 1-deoxy-D-xylulose 5-phosphate = pyridoxine 5'-phosphate + phosphate + 2 H2O + H(+). Its pathway is cofactor biosynthesis; pyridoxine 5'-phosphate biosynthesis; pyridoxine 5'-phosphate from D-erythrose 4-phosphate: step 5/5. Its function is as follows. Catalyzes the complicated ring closure reaction between the two acyclic compounds 1-deoxy-D-xylulose-5-phosphate (DXP) and 3-amino-2-oxopropyl phosphate (1-amino-acetone-3-phosphate or AAP) to form pyridoxine 5'-phosphate (PNP) and inorganic phosphate. This is Pyridoxine 5'-phosphate synthase from Sulfurovum sp. (strain NBC37-1).